The primary structure comprises 179 residues: uncharacterized protein (179 aa).

This is an uncharacterized protein from Bacillus subtilis (strain 168).